The chain runs to 140 residues: Putative nickel-responsive regulator (140 aa).

Ni(2+) contacts are provided by His-76, His-87, His-89, and Cys-95.

It belongs to the transcriptional regulatory CopG/NikR family. The cofactor is Ni(2+).

In terms of biological role, transcriptional regulator. In Rhodopseudomonas palustris (strain BisB5), this protein is Putative nickel-responsive regulator.